We begin with the raw amino-acid sequence, 141 residues long: Hemoglobin subunit alpha-D (141 aa).

Residues 1-141 (MLNHDEKQLI…VSAVLAEKYR (141 aa)) enclose the Globin domain. Residues H58 and H87 each coordinate heme b.

It belongs to the globin family. Heterotetramer of two alpha-D chains and two beta chains. Red blood cells.

Its function is as follows. Involved in oxygen transport from the lung to the various peripheral tissues. In Chrysemys picta bellii (Western painted turtle), this protein is Hemoglobin subunit alpha-D (HBAD).